Here is an 880-residue protein sequence, read N- to C-terminus: Leucine--tRNA ligase (880 aa).

Residues 46 to 56 (PYPSGALHMGH) carry the 'HIGH' region motif. Positions 638 to 642 (KMSKS) match the 'KMSKS' region motif. Lysine 641 is a binding site for ATP.

The protein belongs to the class-I aminoacyl-tRNA synthetase family.

It is found in the cytoplasm. It catalyses the reaction tRNA(Leu) + L-leucine + ATP = L-leucyl-tRNA(Leu) + AMP + diphosphate. This chain is Leucine--tRNA ligase, found in Xanthomonas oryzae pv. oryzae (strain KACC10331 / KXO85).